The primary structure comprises 298 residues: Proton-activated chloride channel (298 aa).

At 1–12 (MPIGFNKACLKN) the chain is on the cytoplasmic side. Residues 13-33 (VFTVILVLIYLALTAVAVFLA) form a helical membrane-spanning segment. Topologically, residues 34 to 245 (YQTISDFMDK…RDPFIQQVKD (212 aa)) are extracellular. Residues 246-266 (IVTANPWNTIAILCGVFMALF) traverse the membrane as a helical segment. Residues 267 to 298 (KAADFAKLSIKWMIRIRKRHIRAKMREMNQIS) lie on the Cytoplasmic side of the membrane.

The protein belongs to the proton-activated chloride channel family.

The protein localises to the cell membrane. It catalyses the reaction chloride(in) = chloride(out). Functionally, chloride channel gated by pH that facilitates the entry of chloride ions into cells upon exposure to extracellular acidic pH. Displays channel activity with distinct kinetic properties compared to the human ortholog channel. The chain is Proton-activated chloride channel from Danio rerio (Zebrafish).